The primary structure comprises 327 residues: 1-aminocyclopropane-1-carboxylate oxidase 1 (327 aa).

Positions 157-257 constitute a Fe2OG dioxygenase domain; that stretch reads PTFGTKVSNY…RMSIASFYNP (101 aa). Histidine 181, aspartate 183, and histidine 238 together coordinate Fe cation.

Belongs to the iron/ascorbate-dependent oxidoreductase family. Fe cation is required as a cofactor.

It catalyses the reaction 1-aminocyclopropane-1-carboxylate + L-ascorbate + O2 = ethene + L-dehydroascorbate + hydrogen cyanide + CO2 + 2 H2O. It participates in alkene biosynthesis; ethylene biosynthesis via S-adenosyl-L-methionine; ethylene from S-adenosyl-L-methionine: step 2/2. This is 1-aminocyclopropane-1-carboxylate oxidase 1 (ACO1) from Doritaenopsis sp. (Moth orchid).